We begin with the raw amino-acid sequence, 374 residues long: F-box/kelch-repeat protein At2g24250 (374 aa).

The F-box domain maps to 14 to 63; that stretch reads PDWSQLPEELLHIISTHLEDHYFDAVHARSVCRSWRSTFPFPSSLLRQSY. 2 Kelch repeats span residues 100-150 and 249-301; these read SEYF…PLGH and NFLV…LGNF.

The polypeptide is F-box/kelch-repeat protein At2g24250 (Arabidopsis thaliana (Mouse-ear cress)).